Reading from the N-terminus, the 178-residue chain is ATP synthase subunit b, chloroplastic (178 aa).

The helical transmembrane segment at 23 to 43 threads the bilayer; sequence IFETNIINLAAVVAIVISFVG.

Belongs to the ATPase B chain family. F-type ATPases have 2 components, F(1) - the catalytic core - and F(0) - the membrane proton channel. F(1) has five subunits: alpha(3), beta(3), gamma(1), delta(1), epsilon(1). F(0) has four main subunits: a(1), b(1), b'(1) and c(10-14). The alpha and beta chains form an alternating ring which encloses part of the gamma chain. F(1) is attached to F(0) by a central stalk formed by the gamma and epsilon chains, while a peripheral stalk is formed by the delta, b and b' chains.

The protein localises to the plastid. Its subcellular location is the chloroplast thylakoid membrane. Its function is as follows. F(1)F(0) ATP synthase produces ATP from ADP in the presence of a proton or sodium gradient. F-type ATPases consist of two structural domains, F(1) containing the extramembraneous catalytic core and F(0) containing the membrane proton channel, linked together by a central stalk and a peripheral stalk. During catalysis, ATP synthesis in the catalytic domain of F(1) is coupled via a rotary mechanism of the central stalk subunits to proton translocation. Component of the F(0) channel, it forms part of the peripheral stalk, linking F(1) to F(0). The protein is ATP synthase subunit b, chloroplastic of Tetradesmus obliquus (Green alga).